Here is a 200-residue protein sequence, read N- to C-terminus: GMP synthase [glutamine-hydrolyzing] subunit A (200 aa).

Residues 3–193 (KIYVVDNGGQ…IGICASYREI (191 aa)) enclose the Glutamine amidotransferase type-1 domain. C80 (nucleophile) is an active-site residue. Active-site residues include H167 and E169.

Heterodimer composed of a glutamine amidotransferase subunit (A) and a GMP-binding subunit (B).

The enzyme catalyses XMP + L-glutamine + ATP + H2O = GMP + L-glutamate + AMP + diphosphate + 2 H(+). It functions in the pathway purine metabolism; GMP biosynthesis; GMP from XMP (L-Gln route): step 1/1. Its function is as follows. Catalyzes the synthesis of GMP from XMP. The polypeptide is GMP synthase [glutamine-hydrolyzing] subunit A (Thermoplasma acidophilum (strain ATCC 25905 / DSM 1728 / JCM 9062 / NBRC 15155 / AMRC-C165)).